The primary structure comprises 216 residues: Glycerol-3-phosphate acyltransferase (216 aa).

6 consecutive transmembrane segments (helical) span residues 3–23 (FPIFALFSFVSGSIPFGYWIA), 48–68 (IGWKFGFIVLALDITKGMLPV), 82–102 (FQLLCGVCAVLGHMFSPFLGF), 112–132 (FGVFLVLTPIACLGAVLVFWV), 142–162 (LGSIFASITLPLVYAFSTILL), and 166–186 (EVSYWVLGTMVFISFGIILTH).

This sequence belongs to the PlsY family. In terms of assembly, probably interacts with PlsX.

It is found in the cell inner membrane. The enzyme catalyses an acyl phosphate + sn-glycerol 3-phosphate = a 1-acyl-sn-glycero-3-phosphate + phosphate. It functions in the pathway lipid metabolism; phospholipid metabolism. Catalyzes the transfer of an acyl group from acyl-phosphate (acyl-PO(4)) to glycerol-3-phosphate (G3P) to form lysophosphatidic acid (LPA). This enzyme utilizes acyl-phosphate as fatty acyl donor, but not acyl-CoA or acyl-ACP. This is Glycerol-3-phosphate acyltransferase from Leptospira interrogans serogroup Icterohaemorrhagiae serovar Lai (strain 56601).